We begin with the raw amino-acid sequence, 275 residues long: Exosome complex component Rrp42 (275 aa).

The protein belongs to the RNase PH family. Rrp42 subfamily. In terms of assembly, component of the archaeal exosome complex. Forms a hexameric ring-like arrangement composed of 3 Rrp41-Rrp42 heterodimers. The hexameric ring associates with a trimer of Rrp4 and/or Csl4 subunits.

It is found in the cytoplasm. In terms of biological role, non-catalytic component of the exosome, which is a complex involved in RNA degradation. Contributes to the structuring of the Rrp41 active site. This is Exosome complex component Rrp42 from Sulfurisphaera tokodaii (strain DSM 16993 / JCM 10545 / NBRC 100140 / 7) (Sulfolobus tokodaii).